We begin with the raw amino-acid sequence, 308 residues long: Glycine--tRNA ligase alpha subunit (308 aa).

This sequence belongs to the class-II aminoacyl-tRNA synthetase family. As to quaternary structure, tetramer of two alpha and two beta subunits.

It is found in the cytoplasm. The enzyme catalyses tRNA(Gly) + glycine + ATP = glycyl-tRNA(Gly) + AMP + diphosphate. The chain is Glycine--tRNA ligase alpha subunit from Brevibacillus brevis (strain 47 / JCM 6285 / NBRC 100599).